A 332-amino-acid chain; its full sequence is Beta-ketoacyl-[acyl-carrier-protein] synthase III 5 (332 aa).

Residues Cys111 and His253 contribute to the active site. Residues 254 to 258 (QANAR) form an ACP-binding region. The active site involves Asn283.

The protein belongs to the thiolase-like superfamily. FabH family. As to quaternary structure, homodimer.

The protein localises to the cytoplasm. It carries out the reaction malonyl-[ACP] + acetyl-CoA + H(+) = 3-oxobutanoyl-[ACP] + CO2 + CoA. It participates in lipid metabolism; fatty acid biosynthesis. In terms of biological role, catalyzes the condensation reaction of fatty acid synthesis by the addition to an acyl acceptor of two carbons from malonyl-ACP. Catalyzes the first condensation reaction which initiates fatty acid synthesis and may therefore play a role in governing the total rate of fatty acid production. Possesses both acetoacetyl-ACP synthase and acetyl transacylase activities. Its substrate specificity determines the biosynthesis of branched-chain and/or straight-chain of fatty acids. This Streptomyces coelicolor (strain ATCC BAA-471 / A3(2) / M145) protein is Beta-ketoacyl-[acyl-carrier-protein] synthase III 5.